The chain runs to 365 residues: NADH-quinone oxidoreductase subunit H 2 (365 aa).

8 consecutive transmembrane segments (helical) span residues 1-21 (MFVV…VVWA), 71-91 (LAPV…PFAP), 100-120 (VGVF…FLAG), 136-156 (IAQV…VVLI), 199-219 (FVSW…VFFI), 254-274 (ILFL…VVLF), 301-321 (IAGY…VVFL), and 342-362 (WKIL…WVVW).

It belongs to the complex I subunit 1 family. In terms of assembly, NDH-1 is composed of 14 different subunits. Subunits NuoA, H, J, K, L, M, N constitute the membrane sector of the complex.

It is found in the cell inner membrane. It carries out the reaction a quinone + NADH + 5 H(+)(in) = a quinol + NAD(+) + 4 H(+)(out). Functionally, NDH-1 shuttles electrons from NADH, via FMN and iron-sulfur (Fe-S) centers, to quinones in the respiratory chain. The immediate electron acceptor for the enzyme in this species is believed to be ubiquinone. Couples the redox reaction to proton translocation (for every two electrons transferred, four hydrogen ions are translocated across the cytoplasmic membrane), and thus conserves the redox energy in a proton gradient. This subunit may bind ubiquinone. In Cytophaga hutchinsonii (strain ATCC 33406 / DSM 1761 / CIP 103989 / NBRC 15051 / NCIMB 9469 / D465), this protein is NADH-quinone oxidoreductase subunit H 2.